Reading from the N-terminus, the 235-residue chain is Photosystem I assembly protein Ycf4 (235 aa).

2 helical membrane passes run 21–43 (NLCW…TSSY) and 63–85 (GIVM…CTIL).

Belongs to the Ycf4 family.

The protein localises to the plastid. Its subcellular location is the chloroplast thylakoid membrane. Its function is as follows. Seems to be required for the assembly of the photosystem I complex. The protein is Photosystem I assembly protein Ycf4 of Amborella trichopoda.